A 745-amino-acid polypeptide reads, in one-letter code: Junction plakoglobin (745 aa).

Position 1 is an N-acetylmethionine (methionine 1). An O-linked (GlcNAc) threonine glycan is attached at threonine 14. Phosphoserine occurs at positions 99 and 125. 12 ARM repeats span residues 132 to 171 (NYQDDAELATRALPELTKLLNDEDPVVVTKAAMIVNQLSK), 172 to 215 (KEAS…LSHH), 216 to 255 (REGLLAIFKSGGIPALVRMLSSPVESVLFYAITTLHNLLL), 258 to 297 (EGAKMAVRLADGLQKMVPLLNKNNPKFLAITTDCLQLLAY), 298 to 341 (GNQE…LSVC), 342 to 381 (PSNKPAIVEAGGMQALGKHLTSNSPRLVQNCLWTLRNLSD), 383 to 420 (ATKQEGLESVLKILVNQLSVDDVNVLTCATGTLSNLTC), 423 to 464 (SKNK…HLTS), 470 to 510 (EMAQ…NLAL), 512 to 551 (PANHAPLQEAAVIPRLVQLLVKAHQDAQRHVAAGTQQPYT), 574 to 613 (PMNRMEIFRLNTIPLFVQLLYSSVENIQRVAAGVLCELAQ), and 615 to 661 (KEAA…PDYR). The interaction with DSC1 and DSG1 stretch occupies residues 132–297 (NYQDDAELAT…TTDCLQLLAY (166 aa)). At serine 182 the chain carries Phosphoserine. The tract at residues 574-661 (PMNRMEIFRL…ISEDKNPDYR (88 aa)) is interaction with DSC1. Serine 665 and serine 730 each carry phosphoserine.

Belongs to the beta-catenin family. In terms of assembly, homodimer. Component of an E-cadherin/catenin adhesion complex composed of at least E-cadherin/CDH1 and gamma-catenin/JUP, and possibly alpha-catenin/CTNNA1; the complex is located to adherens junctions. The stable association of CTNNA1 is controversial as CTNNA1 was shown not to bind to F-actin when assembled in the complex. Interacts with MUC1. Interacts with CAV1. Interacts with PTPRJ. Interacts with DSG1. Interacts with DSC1 and DSC2. Interacts with PKP2. Interacts with PKP3 (via N-terminus); the interaction is required for PKP3 localization to desmosome cell-cell junctions. Interacts with DSG4. In terms of processing, may be phosphorylated by FER.

The protein localises to the cell junction. It is found in the adherens junction. Its subcellular location is the desmosome. It localises to the cytoplasm. The protein resides in the cytoskeleton. The protein localises to the cell membrane. It is found in the nucleus. Its function is as follows. Common junctional plaque protein. The membrane-associated plaques are architectural elements in an important strategic position to influence the arrangement and function of both the cytoskeleton and the cells within the tissue. The presence of plakoglobin in both the desmosomes and in the intermediate junctions suggests that it plays a central role in the structure and function of submembranous plaques. Acts as a substrate for VE-PTP and is required by it to stimulate VE-cadherin function in endothelial cells. Can replace beta-catenin in E-cadherin/catenin adhesion complexes which are proposed to couple cadherins to the actin cytoskeleton. This Bos taurus (Bovine) protein is Junction plakoglobin.